Reading from the N-terminus, the 135-residue chain is Hemoglobin subunit beta-3 (135 aa).

The Globin domain occupies His2–Gln135. Residues His57 and His81 each contribute to the heme b site.

The protein belongs to the globin family. Hb 3 is a heterotetramer of two alpha and two beta-3 chains. As to expression, red blood cells (at protein level).

In terms of biological role, involved in oxygen transport from gills to the various peripheral tissues. This is Hemoglobin subunit beta-3 from Somniosus microcephalus (Greenland sleeper shark).